The chain runs to 86 residues: Curamycin polyketide synthase acyl carrier protein (86 aa).

A Carrier domain is found at 7–86 (QVTVEELATL…VVNGALASGA (80 aa)). An O-(pantetheine 4'-phosphoryl)serine modification is found at serine 44.

4'-phosphopantetheine is transferred from CoA to a specific serine of the apo-ACP-like protein.

It functions in the pathway antibiotic biosynthesis; curamycin biosynthesis. Acyl carrier protein. This chain is Curamycin polyketide synthase acyl carrier protein (curE), found in Streptomyces cyaneus (Streptomyces curacoi).